We begin with the raw amino-acid sequence, 360 residues long: Peptide chain release factor 1 (360 aa).

The residue at position 235 (Gln235) is an N5-methylglutamine.

It belongs to the prokaryotic/mitochondrial release factor family. In terms of processing, methylated by PrmC. Methylation increases the termination efficiency of RF1.

It is found in the cytoplasm. In terms of biological role, peptide chain release factor 1 directs the termination of translation in response to the peptide chain termination codons UAG and UAA. The chain is Peptide chain release factor 1 from Burkholderia vietnamiensis (strain G4 / LMG 22486) (Burkholderia cepacia (strain R1808)).